The primary structure comprises 225 residues: NAD(P)H-quinone oxidoreductase subunit K, chloroplastic (225 aa).

Cysteine 43, cysteine 44, cysteine 108, and cysteine 139 together coordinate [4Fe-4S] cluster.

This sequence belongs to the complex I 20 kDa subunit family. As to quaternary structure, NDH is composed of at least 16 different subunits, 5 of which are encoded in the nucleus. [4Fe-4S] cluster is required as a cofactor.

Its subcellular location is the plastid. It is found in the chloroplast thylakoid membrane. It carries out the reaction a plastoquinone + NADH + (n+1) H(+)(in) = a plastoquinol + NAD(+) + n H(+)(out). It catalyses the reaction a plastoquinone + NADPH + (n+1) H(+)(in) = a plastoquinol + NADP(+) + n H(+)(out). Functionally, NDH shuttles electrons from NAD(P)H:plastoquinone, via FMN and iron-sulfur (Fe-S) centers, to quinones in the photosynthetic chain and possibly in a chloroplast respiratory chain. The immediate electron acceptor for the enzyme in this species is believed to be plastoquinone. Couples the redox reaction to proton translocation, and thus conserves the redox energy in a proton gradient. This Arabidopsis thaliana (Mouse-ear cress) protein is NAD(P)H-quinone oxidoreductase subunit K, chloroplastic.